A 175-amino-acid chain; its full sequence is Large ribosomal subunit protein eL14 (175 aa).

Residues 150 to 175 (KAAKMDSTEGAKRRMQKAIAARKAKK) are disordered. Over residues 152–161 (AKMDSTEGAK) the composition is skewed to basic and acidic residues. Residues 162–175 (RRMQKAIAARKAKK) are compositionally biased toward basic residues.

Belongs to the eukaryotic ribosomal protein eL14 family.

Its function is as follows. Component of the large ribosomal subunit. The ribosome is a large ribonucleoprotein complex responsible for the synthesis of proteins in the cell. This is Large ribosomal subunit protein eL14 (RPL14) from Leishmania donovani.